The sequence spans 122 residues: Large ribosomal subunit protein uL14 (122 aa).

Belongs to the universal ribosomal protein uL14 family. In terms of assembly, part of the 50S ribosomal subunit. Forms a cluster with proteins L3 and L19. In the 70S ribosome, L14 and L19 interact and together make contacts with the 16S rRNA in bridges B5 and B8.

In terms of biological role, binds to 23S rRNA. Forms part of two intersubunit bridges in the 70S ribosome. This chain is Large ribosomal subunit protein uL14, found in Burkholderia multivorans (strain ATCC 17616 / 249).